We begin with the raw amino-acid sequence, 1040 residues long: MQVLPPGSTGGPSRLFILRPVATTLLMAAILLAGIIGYRFLPVAALPEVDYPTIQVVTLYPGASPDVMTSAVTAPLERQFGQMSGLKQMSSQSSGGASVVTLQFQLTLPLDVAEQEVQAAINAATNLLPSDLPNPPIYSKVNPADPPIMTLAVTSNAMPMTQVEDMVETRVAQKISQVSGVGLVTLAGGQRPAVRVKLNAQAVAALGLTSETVRTAITGANVNSAKGSLDGPERAVTLSANDQMQSADEYRRLIIAYQNGAPVRLGDVATVEQGAENSWLGAWANQAPAIVMNVQRQPGANIIATADSIRQMLPQLTESLPKSVKVTVLSDRTTNIRASVRDTQFELMLAIALVVMIIYLFLRNIPATIIPGVAVPLSLIGTFAVMVFLDFSINNLTLMALTIATGFVVDDAIVVIENISRYIEKGEKPLAAALKGAGEIGFTIISLTFSLIAVLIPLLFMGDIVGRLFREFAVTLAVAILISAVVSLTLTPMMCARMLSQQSLRKQNRFSRACERMFDRVIASYGRGLAKVLNHPWLTLSVAFATLLLSVMLWIVIPKGFFPVQDNGIIQGTLQAPQSSSYASMAQRQRQVAERILQDPAVQSLTTFVGVDGANPTLNSARLQINLKPLDARDDRVQQVISRLQTAVATIPGVALYLQPTQDLTIDTQVSRTQYQFTLQATTLDALSHWVPKLQNALQSLPQLSEVSSDWQDRGLAAWVNVDRDSASRLGISMADVDNALYNAFGQRLISTIYTQANQYRVVLEHNTASTPGLAALETIRLTSRDGGTVPLSAIARIEQRFAPLSINHLDQFPVTTFSFNVPEGYSLGDAVQAILDTEKTLALPADITTQFQGSTLAFQAALGSTVWLIVAAVVAMYIVLGVLYESFIHPITILSTLPTAGVGALLALIIAGSELDIIAIIGIILLIGIVKKNAIMMIDFALAAEREQGMSPRDAIFQACLLRFRPILMTTLAALLGALPLMLSTGVGAELRRPLGIAMVGGLLVSQVLTLFTTPVIYLLFDRLSLYVKSRFPRHKEEA.

Transmembrane regions (helical) follow at residues 25 to 45 (LLMA…PVAA), 347 to 367 (LMLA…NIPA), 369 to 389 (IIPG…MVFL), 396 to 416 (LTLM…IVVI), 440 to 460 (IGFT…PLLF), 472 to 492 (FAVT…TLTP), 537 to 557 (WLTL…WIVI), 863 to 883 (LGST…VLGV), 888 to 908 (FIHP…ALLA), 910 to 930 (IIAG…LIGI), 968 to 988 (ILMT…STGV), and 998 to 1018 (IAMV…TPVI).

The protein belongs to the resistance-nodulation-cell division (RND) (TC 2.A.6) family. MdtB subfamily. Part of a tripartite efflux system composed of MdtA, MdtB and MdtC. MdtB forms a heteromultimer with MdtC.

It localises to the cell inner membrane. The polypeptide is Multidrug resistance protein MdtB (Salmonella agona (strain SL483)).